Here is a 517-residue protein sequence, read N- to C-terminus: Serine hydroxymethyltransferase 1, mitochondrial (517 aa).

A mitochondrion-targeting transit peptide spans 1–30; that stretch reads MAMAMALRRLSSSIDKPIRPLIRSTSCYMS. Lys-286 is modified (N6-(pyridoxal phosphate)lysine).

It belongs to the SHMT family. Homotetramer. Interacts with GLU1. Interacts with UBP16. It depends on pyridoxal 5'-phosphate as a cofactor. Ubiquitinated. Ubiquitous. Mostly expressed in leaves, less abundant in stems, flowers and siliques, and barely detectable in roots.

It localises to the mitochondrion. Its subcellular location is the cytoplasm. It carries out the reaction (6R)-5,10-methylene-5,6,7,8-tetrahydrofolate + glycine + H2O = (6S)-5,6,7,8-tetrahydrofolate + L-serine. It participates in one-carbon metabolism; tetrahydrofolate interconversion. Functions in the photorespiratory pathway in catalyzing the interconversion of serine and glycine. Involved in controlling cell damage caused by abiotic stress, such as high light and salt and the hypersensitive defense response of plants. The protein is Serine hydroxymethyltransferase 1, mitochondrial of Arabidopsis thaliana (Mouse-ear cress).